The chain runs to 292 residues: Hemin import ATP-binding protein HmuV (292 aa).

Residues 38 to 271 (LRADGIAVTR…ELLTRVYGHP (234 aa)) form the ABC transporter domain. 70-77 (GPNGAGKS) lines the ATP pocket.

This sequence belongs to the ABC transporter superfamily. Heme (hemin) importer (TC 3.A.1.14.5) family. As to quaternary structure, the complex is composed of two ATP-binding proteins (HmuV), two transmembrane proteins (HmuU) and a solute-binding protein (HmuT).

It is found in the cell membrane. In terms of biological role, part of the ABC transporter complex HmuTUV involved in hemin import. Responsible for energy coupling to the transport system. The sequence is that of Hemin import ATP-binding protein HmuV from Rhodococcus jostii (strain RHA1).